Reading from the N-terminus, the 527-residue chain is Bifunctional methyltransferase (527 aa).

A hemK region spans residues 1–309 (MQYSIKQVLS…GHSRVILFSP (309 aa)). The tract at residues 1–311 (MQYSIKQVLS…SRVILFSPIN (311 aa)) is RF MTase. Residues 149-153 (GTGSG), D172, W201, N216, E356, E381, N408, and D430 contribute to the S-adenosyl-L-methionine site. A substrate-binding site is contributed by 216 to 219 (NPPY). A tRNA (guanine-N(7)-)-methyltransferase region spans residues 310-527 (INLNRSYARR…IILQHVSGDH (218 aa)). Positions 314–527 (RSYARRIGKS…IILQHVSGDH (214 aa)) are tRNA MTase. Residue D430 is part of the active site. Substrate is bound by residues K434 and D466.

It in the C-terminal section; belongs to the class I-like SAM-binding methyltransferase superfamily. TrmB family. In the N-terminal section; belongs to the protein N5-glutamine methyltransferase family. PrmC subfamily.

It carries out the reaction L-glutaminyl-[peptide chain release factor] + S-adenosyl-L-methionine = N(5)-methyl-L-glutaminyl-[peptide chain release factor] + S-adenosyl-L-homocysteine + H(+). The enzyme catalyses guanosine(46) in tRNA + S-adenosyl-L-methionine = N(7)-methylguanosine(46) in tRNA + S-adenosyl-L-homocysteine. In terms of biological role, methylates the class 1 translation termination release factors RF1/PrfA and RF2/PrfB on the glutamine residue of the universally conserved GGQ motif. Functionally, catalyzes the formation of N(7)-methylguanine at position 46 (m7G46) in tRNA. In Rickettsia felis (strain ATCC VR-1525 / URRWXCal2) (Rickettsia azadi), this protein is Bifunctional methyltransferase (prmC/trmB).